Here is a 157-residue protein sequence, read N- to C-terminus: Sorting nexin-3 (157 aa).

A disordered region spans residues methionine 1–glutamine 21. The span at valine 11–glutamine 21 shows a compositional bias: polar residues. In terms of domain architecture, PX spans asparagine 32–proline 152. Residues arginine 75, serine 77, lysine 101, and arginine 117 each coordinate a 1,2-diacyl-sn-glycero-3-phospho-(1D-myo-inositol-3-phosphate).

Belongs to the sorting nexin family.

The protein resides in the cytoplasm. Its subcellular location is the golgi apparatus membrane. The protein localises to the prevacuolar compartment membrane. Required for retention of late Golgi membrane proteins. Component of the retrieval machinery that functions by direct interaction with the cytosolic tails of certain TGN membrane proteins during the sorting/budding process at the prevacuolar compartment. Binds phosphatidylinositol 3-phosphate (PtdIns(P3)). This is Sorting nexin-3 (SNX3) from Candida albicans (strain SC5314 / ATCC MYA-2876) (Yeast).